The chain runs to 379 residues: Transcription factor TIP2 (379 aa).

A disordered region spans residues 144–184 (MVGPFESSPTPRSGGGRKRSRATAGFHGGGPANGVEKKEKQ). The tract at residues 173 to 186 (GPANGVEKKEKQRR) is basic motif; degenerate. Positions 173–222 (GPANGVEKKEKQRRLRLTEKYNALMLLIPNRTKEDRATVISDAIEYIQEL) constitute a bHLH domain. The segment at 187-222 (LRLTEKYNALMLLIPNRTKEDRATVISDAIEYIQEL) is helix-loop-helix motif.

This sequence belongs to the bHLH protein family. In terms of assembly, homodimer. Interacts with TDR, but not with EAT1. Highly expressed in anthers; strong expression in the middle layer and tapetum, and weak expression in the endothecium.

Its subcellular location is the nucleus. Transcription factor that binds to the E-box-containing promoter regions of the transcription factors TDR and EAT1, activating their expression. May have a role in specifying the cell pattern of the inner anther walls and functioning in meiosis progression. Required for male reproduction. Acts downstream of UDT1 and GAMYB, but upstream of TDR1 and EAT1 in pollen development. The sequence is that of Transcription factor TIP2 (TIP2) from Oryza sativa subsp. japonica (Rice).